A 345-amino-acid chain; its full sequence is 1-aminocyclopropane-1-carboxylate oxidase homolog 7 (345 aa).

Residue Lys16 forms a Glycyl lysine isopeptide (Lys-Gly) (interchain with G-Cter in ubiquitin) linkage. The Fe2OG dioxygenase domain maps to 194-293 (KGLHMICHYY…RISIACFFSS (100 aa)). Positions 218, 220, and 274 each coordinate Fe cation. Arg284 provides a ligand contact to 2-oxoglutarate.

It belongs to the iron/ascorbate-dependent oxidoreductase family. Fe(2+) is required as a cofactor.

In Arabidopsis thaliana (Mouse-ear cress), this protein is 1-aminocyclopropane-1-carboxylate oxidase homolog 7.